A 935-amino-acid polypeptide reads, in one-letter code: Potassium channel AKT1 (935 aa).

Topologically, residues 1 to 106 (MARWGAARMA…YDRRYRIWET (106 aa)) are cytoplasmic. The chain crosses the membrane as a helical span at residues 107 to 127 (FLIVLVVYSAWVSPFEFGFIP). Topologically, residues 128–136 (KPTGALATA) are extracellular. Residues 137–157 (DNVVNAFFAVDIILTFFVAYL) traverse the membrane as a helical segment. Residues 158–178 (DKMSYMLEDDPKKIAWRYSTT) are Cytoplasmic-facing. A helical transmembrane segment spans residues 179–199 (WLVLDVASTIPSEFARRILPS). Over 200-205 (KLRSYG) the chain is Extracellular. The helical; Voltage-sensor transmembrane segment at 206-226 (FFNMLRLWRLRRVSSLFSRLE) threads the bilayer. Residues 227–240 (KDRHFNYFWVRCAK) lie on the Cytoplasmic side of the membrane. A helical transmembrane segment spans residues 241 to 261 (LICVTLFAVHCAACFYYLLAD). The Extracellular segment spans residues 262–288 (RYPVPTSTWIGNYMADFHERSLWIRYV). The segment at residues 289 to 308 (TSVYWSITTLTTVGYGDLHA) is an intramembrane region (pore-forming). At 309–312 (ENTR) the chain is on the extracellular side. Residues 313–333 (EMIFNIFYMLFNLGLTAYLIG) traverse the membrane as a helical segment. The Cytoplasmic segment spans residues 334–935 (NMTNLVVHGT…WDAEKMKGKS (602 aa)). Position 419-538 (419-538 (LFQGVSNDLI…TIIMNNLIQF (120 aa))) interacts with a nucleoside 3',5'-cyclic phosphate. ANK repeat units follow at residues 565-594 (DLPI…DPNE), 598-627 (DGHT…DPNA), 631-660 (EGKV…DLSS), 662-691 (DTGL…DVNR), 695-724 (DGTT…DIDK), and 728-757 (NGWT…ATAS). The segment at 826-854 (SQAQRETDHPLSRGGLAATGSPNPSSGSR) is disordered. The segment covering 845–854 (GSPNPSSGSR) has biased composition (polar residues). The region spanning 859 to 935 (RVTISCPEKG…WDAEKMKGKS (77 aa)) is the KHA domain.

The protein belongs to the potassium channel family. Plant (TC 1.A.1.4) subfamily. The potassium channel is probably a homo- or heterotetrameric complex of pore-forming subunits. As to expression, highly expressed in the epidermis and endodermis of roots, and at lower level in cells of the vasculature and the cortex. Expressed in xylem parenchyma, phloem and mesophyll cells of leaves.

Its subcellular location is the membrane. In terms of biological role, highly selective inward-rectifying potassium channel that mediates potassium uptake by plant roots. This chain is Potassium channel AKT1 (AKT1), found in Oryza sativa subsp. indica (Rice).